Reading from the N-terminus, the 417-residue chain is NADH-quinone oxidoreductase subunit D (417 aa).

Belongs to the complex I 49 kDa subunit family. In terms of assembly, NDH-1 is composed of 14 different subunits. Subunits NuoB, C, D, E, F, and G constitute the peripheral sector of the complex.

The protein resides in the cell inner membrane. It carries out the reaction a quinone + NADH + 5 H(+)(in) = a quinol + NAD(+) + 4 H(+)(out). In terms of biological role, NDH-1 shuttles electrons from NADH, via FMN and iron-sulfur (Fe-S) centers, to quinones in the respiratory chain. The immediate electron acceptor for the enzyme in this species is believed to be ubiquinone. Couples the redox reaction to proton translocation (for every two electrons transferred, four hydrogen ions are translocated across the cytoplasmic membrane), and thus conserves the redox energy in a proton gradient. The protein is NADH-quinone oxidoreductase subunit D of Cupriavidus taiwanensis (strain DSM 17343 / BCRC 17206 / CCUG 44338 / CIP 107171 / LMG 19424 / R1) (Ralstonia taiwanensis (strain LMG 19424)).